Reading from the N-terminus, the 215-residue chain is Phosphoserine phosphatase (215 aa).

The active-site Nucleophile is the D11. Residues D11 and D13 each contribute to the Mg(2+) site. D13 functions as the Proton donor in the catalytic mechanism. Substrate contacts are provided by residues E20, R56, 99-100 (SG), and K144. D167 contributes to the Mg(2+) binding site. Position 170 (N170) interacts with substrate.

Belongs to the HAD-like hydrolase superfamily. SerB family. It depends on Mg(2+) as a cofactor.

The enzyme catalyses O-phospho-L-serine + H2O = L-serine + phosphate. The catalysed reaction is O-phospho-D-serine + H2O = D-serine + phosphate. It participates in amino-acid biosynthesis; L-serine biosynthesis; L-serine from 3-phospho-D-glycerate: step 3/3. In Streptococcus thermophilus (strain ATCC BAA-250 / LMG 18311), this protein is Phosphoserine phosphatase.